The primary structure comprises 272 residues: sn-1 stearoyl-lipid 9-desaturase (272 aa).

2 helical membrane-spanning segments follow: residues 11–31 (INWVNTLFFLGLHIGALFAFI) and 39–59 (AVGVALLLYWITGGLGITLGF). The Histidine box-1 motif lies at 60 to 65 (HRLVTH). Positions 97 to 101 (HRIHH) match the Histidine box-2 motif. Residues 160-180 (IALGLLLLYLGGWSFVVWGVF) form a helical membrane-spanning segment. Positions 230-234 (HHAFQ) match the Histidine box-3 motif.

It belongs to the fatty acid desaturase type 2 family. Requires Fe(2+) as cofactor.

The protein resides in the membrane. It catalyses the reaction a 1-octadecanoyl 2-acyl-glycerolipid + 2 reduced [2Fe-2S]-[ferredoxin] + O2 + 2 H(+) = a 1-[(9Z)-octadecenoyl]-2-acyl-glycerolipid + 2 oxidized [2Fe-2S]-[ferredoxin] + 2 H2O. The protein operates within lipid metabolism; polyunsaturated fatty acid biosynthesis. Its function is as follows. Desaturase involved in fatty acid biosynthesis. Introduces a double bond at carbon 9 of stearoyl groups (18:0) attached to the sn-1 position of the glycerol moiety of membrane glycerolipids. Does not desaturate palmitic acid (16:0), palmitoleic acid (16:1) and cis-vaccenic acid (18:1). This Anabaena variabilis protein is sn-1 stearoyl-lipid 9-desaturase.